Here is a 314-residue protein sequence, read N- to C-terminus: Fructose-1,6-bisphosphatase class 1 (314 aa).

Mg(2+) is bound by residues glutamate 91, aspartate 112, leucine 114, and aspartate 115. Residues 115–118, tyrosine 223, and lysine 254 contribute to the substrate site; that span reads DGSS. Glutamate 260 provides a ligand contact to Mg(2+).

Belongs to the FBPase class 1 family. Homotetramer. Requires Mg(2+) as cofactor.

It is found in the cytoplasm. The enzyme catalyses beta-D-fructose 1,6-bisphosphate + H2O = beta-D-fructose 6-phosphate + phosphate. Its pathway is carbohydrate biosynthesis; gluconeogenesis. This chain is Fructose-1,6-bisphosphatase class 1, found in Geobacter metallireducens (strain ATCC 53774 / DSM 7210 / GS-15).